A 389-amino-acid polypeptide reads, in one-letter code: Basigin (389 aa).

Positions 1–21 are cleaved as a signal peptide; the sequence is MAAALLLALAFTLLSGQGACA. The Extracellular segment spans residues 22–325; that stretch reads AAGFLKAPLS…ETISLRVRSR (304 aa). The region spanning 37-120 is the Ig-like domain; the sequence is GGSVVLHCEA…SSDPDRNHLT (84 aa). 3 disulfide bridges follow: Cys-44-Cys-108, Cys-157-Cys-203, and Cys-242-Cys-305. Residues 138-219 form the Ig-like C2-type domain; sequence EPGTIQTSVQ…VGRSEINVEG (82 aa). Residues Asn-160, Asn-270, and Asn-306 are each glycosylated (N-linked (GlcNAc...) asparagine). Residues 221 to 319 form the Ig-like V-type domain; sequence PRIKVGKKSE…AQGTTRETIS (99 aa). Residues 326–349 form a helical membrane-spanning segment; it reads MAALWPFLGIVAEVLVLVTIIFIY. Residues 350 to 389 lie on the Cytoplasmic side of the membrane; the sequence is EKRRKPDQTLDEDDPGAAPLKGSGTHMNDKDKNVRQRNAT. The tract at residues 356–389 is disordered; sequence DQTLDEDDPGAAPLKGSGTHMNDKDKNVRQRNAT. Thr-358 carries the post-translational modification Phosphothreonine. Phosphoserine is present on Ser-372.

As to quaternary structure, interacts with NXNL1. Interacts with SLC2A1 and SLC16A1/GLUT1. Interacts with XKR8; promoting its localization at the cell membrane. In terms of assembly, interacts with ATP1B2, MAG and L1CAM. Interacts with SLC16A7. Interacts with VEGFA, KDR/VEGFR2, PPIA/CYPA, SLC1A3, SLC16A11 and SLC16A12. Interacts with PPIL2; regulates BSG transport to the cell membrane. Interacts with SLC16A1; interaction mediates SLC16A1 targeting to the plasma membrane. Interacts with SLC16A3; interaction mediates SLC16A3 targeting to the plasma membrane. Interacts with SLC16A6; this interaction mediates targeting to the plasma membrane. In terms of processing, N-glycosylated. N-glycosylated. During spermatogenesis, probably deglycosylated during epididymal transit. Retina-specific. Expressed in both rods and cones (at protein level). As to expression, testis and caput, corpus and cauda epididymides (at protein level). Expressed in the brain, lung, liver, kidney, heart, spleen, uterus, retina and skeletal muscle.

Its subcellular location is the cell membrane. The protein localises to the photoreceptor inner segment. The protein resides in the cell projection. It localises to the cilium. It is found in the photoreceptor outer segment. Its subcellular location is the endoplasmic reticulum membrane. The protein localises to the basolateral cell membrane. Essential for normal retinal maturation and development. Acts as a retinal cell surface receptor for NXNL1 and plays an important role in NXNL1-mediated survival of retinal cone photoreceptors. In association with glucose transporter SLC16A1/GLUT1 and NXNL1, promotes retinal cone survival by enhancing aerobic glycolysis and accelerating the entry of glucose into photoreceptors. Its function is as follows. Signaling receptor for cyclophilins, essential for PPIA/CYPA and PPIB/CYPB-dependent signaling related to chemotaxis and adhesion of immune cells. Plays an important role in targeting the monocarboxylate transporters SLC16A1, SLC16A3 and SLC16A8 to the plasma membrane. Acts as a coreceptor for vascular endothelial growth factor receptor 2 (KDR/VEGFR2) in endothelial cells enhancing its VEGFA-mediated activation and downstream signaling. Promotes angiogenesis through EPAS1/HIF2A-mediated up-regulation of VEGFA and KDR/VEGFR2 in endothelial cells. Plays an important role in spermatogenesis; mediates interactions between germ cells and Sertoli cell and is essential for the development/differentiation of germ cells to round spermatids. The protein is Basigin (Bsg) of Mus musculus (Mouse).